Consider the following 198-residue polypeptide: Ribonuclease HII (198 aa).

The RNase H type-2 domain occupies Asn11–Val198. A divalent metal cation is bound by residues Asp17, Glu18, and Asp109.

It belongs to the RNase HII family. Mn(2+) is required as a cofactor. It depends on Mg(2+) as a cofactor.

The protein resides in the cytoplasm. It carries out the reaction Endonucleolytic cleavage to 5'-phosphomonoester.. Functionally, endonuclease that specifically degrades the RNA of RNA-DNA hybrids. This chain is Ribonuclease HII, found in Yersinia pseudotuberculosis serotype O:1b (strain IP 31758).